The chain runs to 208 residues: Transcription factor atf-4 homolog (208 aa).

Disordered regions lie at residues His18–Pro47 and Glu106–Glu165. Over residues Asn110–Ser120 the composition is skewed to low complexity. Over residues Ser121–Lys141 the composition is skewed to basic and acidic residues. The bZIP domain maps to Pro138–Met201. Positions Lys140 to Lys163 are basic motif. Residues Leu173–Leu187 are leucine-zipper.

The protein belongs to the bZIP family.

The protein resides in the nucleus. Transcription factor. Involved in positively modulating longevity and stress tolerance, probably acting by positively regulating expression of transsulfuration enzyme cth-2, leading to increased hydrogen sulfide production and therefore increased protein persulfidation, a protective modification of redox-reactive cysteines. May mediate longevity and increased stress resistance induced by mTORC1 suppression. The polypeptide is Transcription factor atf-4 homolog (Caenorhabditis elegans).